A 364-amino-acid chain; its full sequence is Phosphoserine aminotransferase (364 aa).

L-glutamate is bound at residue Arg-46. Pyridoxal 5'-phosphate is bound by residues 80-81 (AR), Trp-106, Thr-157, Asp-176, and Gln-199. Lys-200 bears the N6-(pyridoxal phosphate)lysine mark. 241–242 (NT) lines the pyridoxal 5'-phosphate pocket.

This sequence belongs to the class-V pyridoxal-phosphate-dependent aminotransferase family. SerC subfamily. Homodimer. The cofactor is pyridoxal 5'-phosphate.

Its subcellular location is the cytoplasm. The catalysed reaction is O-phospho-L-serine + 2-oxoglutarate = 3-phosphooxypyruvate + L-glutamate. It carries out the reaction 4-(phosphooxy)-L-threonine + 2-oxoglutarate = (R)-3-hydroxy-2-oxo-4-phosphooxybutanoate + L-glutamate. The protein operates within amino-acid biosynthesis; L-serine biosynthesis; L-serine from 3-phospho-D-glycerate: step 2/3. Its pathway is cofactor biosynthesis; pyridoxine 5'-phosphate biosynthesis; pyridoxine 5'-phosphate from D-erythrose 4-phosphate: step 3/5. Catalyzes the reversible conversion of 3-phosphohydroxypyruvate to phosphoserine and of 3-hydroxy-2-oxo-4-phosphonooxybutanoate to phosphohydroxythreonine. The polypeptide is Phosphoserine aminotransferase (Vibrio vulnificus (strain YJ016)).